Here is a 140-residue protein sequence, read N- to C-terminus: Large ribosomal subunit protein uL11 (140 aa).

Belongs to the universal ribosomal protein uL11 family. Part of the ribosomal stalk of the 50S ribosomal subunit. Interacts with L10 and the large rRNA to form the base of the stalk. L10 forms an elongated spine to which L12 dimers bind in a sequential fashion forming a multimeric L10(L12)X complex. In terms of processing, one or more lysine residues are methylated.

Its function is as follows. Forms part of the ribosomal stalk which helps the ribosome interact with GTP-bound translation factors. The sequence is that of Large ribosomal subunit protein uL11 from Geotalea daltonii (strain DSM 22248 / JCM 15807 / FRC-32) (Geobacter daltonii).